The sequence spans 1190 residues: Phosphatidylinositol 3,4,5-trisphosphate 5-phosphatase 1 (1190 aa).

Residues 8–104 (WNHGNITRSK…GLVTHLQFPV (97 aa)) enclose the SH2 domain. Acidic residues predominate over residues 111-120 (AIDEPEEDTE). A disordered region spans residues 111–130 (AIDEPEEDTESVMSPPELPP). The SH3-binding 1 signature appears at 126–131 (PELPPR). Position 245 is a phosphoserine (S245). The short motif at 914 to 917 (NPNY) is the NPXY motif 1 element. Y917 is subject to Phosphotyrosine. S934 is subject to Phosphoserine. Y944 carries the post-translational modification Phosphotyrosine. Residues 946–1190 (QLPKDSSLGP…ESLLGRTAMQ (245 aa)) form a disordered region. Over residues 961-971 (PPTPPSQPPLS) the composition is skewed to pro residues. T963 carries the post-translational modification Phosphothreonine. Phosphoserine is present on residues S966 and S971. The SH3-binding 2 signature appears at 969–974 (PLSPKK). The span at 989-998 (QETRPGDLGK) shows a compositional bias: basic and acidic residues. The interval 1014–1028 (MFENPLYGSVSPFPK) is interaction with DAB2. The NPXY motif 2 motif lies at 1017-1020 (NPLY). Position 1020 is a phosphotyrosine (Y1020). Residues 1031–1045 (PRKEQESPKMMRKEP) are compositionally biased toward basic and acidic residues. Residues 1038–1049 (PKMMRKEPPPCP) carry the SH3-binding 3 motif. Pro residues predominate over residues 1140 to 1149 (IPAPRPPLPV). A compositionally biased stretch (basic and acidic residues) spans 1161–1183 (KGRDYRDNTELPHHGKHRQEESL).

It belongs to the inositol 1,4,5-trisphosphate 5-phosphatase family. As to quaternary structure, interacts with tyrosine phosphorylated forms of SHC1. Interacts with tyrosine phosphorylated form of DOK1. Interacts with tyrosine phosphorylated form of DOK3. Interacts with tyrosine phosphorylated form of SLAMF1/CD150. Interacts with PTPN11/SHP-2 in response to IL-3. Interacts with receptor EPOR. Interacts with receptors MS4A2/FCER1B and FCER1G. Interacts with receptors FCGR2B and FCGR3. Interacts with receptor FCGR2A, leading to regulate gene expression during the phagocytic process. Interacts with GRB2. Interacts with PLCG1. Interacts with tyrosine kinases SRC and TEC. Interacts with c-Met/MET. Interacts with MILR1 (tyrosine-phosphorylated). Can weakly interact (via NPXY motif 2) with DAB2 (via PID domain); the interaction is impaired by tyrosine phosphorylation of the NPXY motif. Interacts (via SH2 domain) with tyrosine phosphorylated KLRC1 (via ITIM). Interacts with MPL/TPOR. In terms of processing, tyrosine phosphorylated by the members of the SRC family after exposure to a diverse array of extracellular stimuli such as cytokines, growth factors, antibodies, chemokines, integrin ligands and hypertonic and oxidative stress. Phosphorylated upon IgG receptor FCGR2B-binding.

The protein resides in the cytoplasm. The protein localises to the cell membrane. It is found in the membrane raft. Its subcellular location is the cytoskeleton. The catalysed reaction is a 1,2-diacyl-sn-glycero-3-phospho-(1D-myo-inositol-3,4,5-trisphosphate) + H2O = a 1,2-diacyl-sn-glycero-3-phospho-(1D-myo-inositol-3,4-bisphosphate) + phosphate. It catalyses the reaction 1D-myo-inositol 1,3,4,5-tetrakisphosphate + H2O = 1D-myo-inositol 1,3,4-trisphosphate + phosphate. It carries out the reaction a 1,2-diacyl-sn-glycero-3-phospho-(1D-myo-inositol-4,5-bisphosphate) + H2O = a 1,2-diacyl-sn-glycero-3-phospho-(1D-myo-inositol 4-phosphate) + phosphate. Its activity is regulated as follows. Activated upon translocation to the sites of synthesis of PtdIns(3,4,5)P3 in the membrane. Phosphatidylinositol (PtdIns) phosphatase that specifically hydrolyzes the 5-phosphate of phosphatidylinositol-3,4,5-trisphosphate (PtdIns(3,4,5)P3) to produce PtdIns(3,4)P2, thereby negatively regulating the PI3K (phosphoinositide 3-kinase) pathways. Also able to hydrolyze the 5-phosphate of phosphatidylinositol-4,5-bisphosphate (PtdIns(4,5)P3) and inositol 1,3,4,5-tetrakisphosphate. Acts as a negative regulator of B-cell antigen receptor signaling. Mediates signaling from the FC-gamma-RIIB receptor (FCGR2B), playing a central role in terminating signal transduction from activating immune/hematopoietic cell receptor systems. Acts as a negative regulator of myeloid cell proliferation/survival and chemotaxis, mast cell degranulation, immune cells homeostasis, integrin alpha-IIb/beta-3 signaling in platelets and JNK signaling in B-cells. Regulates proliferation of osteoclast precursors, macrophage programming, phagocytosis and activation and is required for endotoxin tolerance. Involved in the control of cell-cell junctions, CD32a signaling in neutrophils and modulation of EGF-induced phospholipase C activity. Key regulator of neutrophil migration, by governing the formation of the leading edge and polarization required for chemotaxis. Modulates FCGR3/CD16-mediated cytotoxicity in NK cells. Mediates the activin/TGF-beta-induced apoptosis through its Smad-dependent expression. This is Phosphatidylinositol 3,4,5-trisphosphate 5-phosphatase 1 (Inpp5d) from Rattus norvegicus (Rat).